The following is a 122-amino-acid chain: Large ribosomal subunit protein uL14 (122 aa).

Belongs to the universal ribosomal protein uL14 family. In terms of assembly, part of the 50S ribosomal subunit. Forms a cluster with proteins L3 and L19. In the 70S ribosome, L14 and L19 interact and together make contacts with the 16S rRNA in bridges B5 and B8.

In terms of biological role, binds to 23S rRNA. Forms part of two intersubunit bridges in the 70S ribosome. The polypeptide is Large ribosomal subunit protein uL14 (Borrelia hermsii (strain HS1 / DAH)).